Here is a 341-residue protein sequence, read N- to C-terminus: S-adenosylmethionine:tRNA ribosyltransferase-isomerase (341 aa).

This sequence belongs to the QueA family. As to quaternary structure, monomer.

The protein resides in the cytoplasm. It carries out the reaction 7-aminomethyl-7-carbaguanosine(34) in tRNA + S-adenosyl-L-methionine = epoxyqueuosine(34) in tRNA + adenine + L-methionine + 2 H(+). It functions in the pathway tRNA modification; tRNA-queuosine biosynthesis. Its function is as follows. Transfers and isomerizes the ribose moiety from AdoMet to the 7-aminomethyl group of 7-deazaguanine (preQ1-tRNA) to give epoxyqueuosine (oQ-tRNA). This is S-adenosylmethionine:tRNA ribosyltransferase-isomerase from Clostridium kluyveri (strain NBRC 12016).